We begin with the raw amino-acid sequence, 226 residues long: Cytidylate kinase (226 aa).

An ATP-binding site is contributed by 10–18 (GFSSTGKST).

The protein belongs to the cytidylate kinase family. Type 1 subfamily.

Its subcellular location is the cytoplasm. The enzyme catalyses CMP + ATP = CDP + ADP. It carries out the reaction dCMP + ATP = dCDP + ADP. This is Cytidylate kinase from Flavobacterium psychrophilum (strain ATCC 49511 / DSM 21280 / CIP 103535 / JIP02/86).